The primary structure comprises 545 residues: Phenylalanine--tRNA ligase beta subunit (545 aa).

One can recognise a B5 domain in the interval F268 to P343. The Mg(2+) site is built by D321, D327, E330, and D331.

Belongs to the phenylalanyl-tRNA synthetase beta subunit family. Type 2 subfamily. Tetramer of two alpha and two beta subunits. It depends on Mg(2+) as a cofactor.

It is found in the cytoplasm. It carries out the reaction tRNA(Phe) + L-phenylalanine + ATP = L-phenylalanyl-tRNA(Phe) + AMP + diphosphate + H(+). This is Phenylalanine--tRNA ligase beta subunit from Saccharolobus islandicus (strain M.16.27) (Sulfolobus islandicus).